Consider the following 1707-residue polypeptide: Mediator of DNA damage checkpoint protein 1 (1707 aa).

The interval 1-23 (MESTQVIDWDAEEEEETELSSGS) is disordered. Residues 1–150 (MESTQVIDWD…PRSLLTIEKT (150 aa)) are interaction with CHEK2. Residues 2 to 222 (ESTQVIDWDA…SSPFGLGSDT (221 aa)) form an interaction with the MRN complex region. Thr4 is subject to Phosphothreonine. Residues 9 to 18 (WDAEEEEETE) show a composition bias toward acidic residues. The FHA domain occupies 54 to 105 (NVVGRSPDCSVALPFPSISKQHAVIEISAWNKAPILQDCGSLNGTQIVKPPR). Thr146 is subject to Phosphothreonine. Residues 166–328 (ADSEEEGDFP…EERIPVTPPV (163 aa)) form a disordered region. A phosphoserine mark is found at Ser168 and Ser176. Positions 183-192 (GQRNTASPSA) are enriched in polar residues. 2 positions are modified to phosphoserine: Ser198 and Ser220. Position 222 is a phosphothreonine (Thr222). Residues 252-263 (ANGTTAGIQAQP) show a composition bias toward polar residues. Over residues 264–278 (TEHKLKDTKVKKEAG) the composition is skewed to basic and acidic residues. Ser298 is modified (phosphoserine). At Thr300 the chain carries Phosphothreonine. Ser313 bears the Phosphoserine mark. Residue Thr315 is modified to Phosphothreonine. Position 360 is a phosphoserine (Ser360). A Phosphothreonine modification is found at Thr362. The span at 369-378 (ALDVPLERNH) shows a compositional bias: basic and acidic residues. The interval 369-398 (ALDVPLERNHTPMVINSDTDEEEEEEEEVS) is disordered. Ser385 carries the phosphoserine modification. The segment covering 386 to 397 (DTDEEEEEEEEV) has biased composition (acidic residues). Thr387 is subject to Phosphothreonine. Phosphoserine occurs at positions 398, 415, 425, 438, and 442. Disordered regions lie at residues 417 to 497 (DPGA…PGSH), 520 to 642 (PGPS…AKEC), 679 to 699 (LFPC…QTPG), and 718 to 746 (REQS…HQHL). Residues 425–439 (SQPQVLVEQSQSASG) show a composition bias toward polar residues. Thr444 carries the phosphothreonine modification. Phosphoserine is present on Ser461. Phosphothreonine is present on Thr470. Phosphoserine occurs at positions 492, 493, 591, 593, and 595. Over residues 580–595 (VSEQESTLEVRSQSGS) the composition is skewed to polar residues. Positions 626–642 (GREREAHVGRTKSAKEC) are enriched in basic and acidic residues. Over residues 719–730 (EQSETSELHEAH) the composition is skewed to basic and acidic residues. 2 positions are modified to phosphoserine: Ser735 and Ser750. The residue at position 769 (Lys769) is an N6-acetyllysine. 3 stretches are compositionally biased toward basic and acidic residues: residues 778–804 (ADRM…RDVI), 812–868 (TKDR…REWE), and 875–889 (TPDR…HDQK). 2 disordered regions span residues 778-899 (ADRM…TLKP) and 914-1510 (IITG…QETA). 3 positions are modified to phosphoserine: Ser885, Ser929, and Ser962. Residues 968–986 (STQSLLTSQSQKQSTPQPL) are compositionally biased toward low complexity. Ser991 bears the Phosphoserine mark. Polar residues-rich tracts occupy residues 1026 to 1056 (PNTT…STRT), 1068 to 1086 (QPST…SQVT), and 1101 to 1113 (EIQS…QSVT). Thr1056 carries the phosphothreonine modification. Residues Ser1104, Ser1126, and Ser1128 each carry the phosphoserine modification. 3 positions are modified to phosphothreonine: Thr1132, Thr1173, and Thr1234. Composition is skewed to polar residues over residues 1225–1241 (PLTS…TSRA), 1265–1281 (PSTS…SSQA), 1295–1308 (VPTT…TSKK), and 1317–1326 (LVTQGRTYKP). Residues Thr1297 and Thr1298 each carry the phosphothreonine modification. At Ser1327 the chain carries Phosphoserine. Residues 1343-1363 (PSTSTDHLVTPKVTDQSLTLQ) are compositionally biased toward polar residues. Thr1352 carries the post-translational modification Phosphothreonine. The residue at position 1359 (Ser1359) is a Phosphoserine. The segment covering 1364–1376 (SSPLSASPVSSTP) has biased composition (low complexity). Thr1375 is subject to Phosphothreonine. The span at 1378–1393 (LKPPVPIAQPVTPEPI) shows a compositional bias: pro residues. Residue Lys1418 forms a Glycyl lysine isopeptide (Lys-Gly) (interchain with G-Cter in SUMO2) linkage. Low complexity predominate over residues 1421–1441 (SALSEPEPQSSASQSSGASEA). Phosphoserine occurs at positions 1435, 1436, 1439, and 1443. A compositionally biased stretch (basic and acidic residues) spans 1459-1473 (VIKEEPVETEVKEEP). Lys1461 participates in a covalent cross-link: Glycyl lysine isopeptide (Lys-Gly) (interchain with G-Cter in SUMO1); alternate. Lys1461 participates in a covalent cross-link: Glycyl lysine isopeptide (Lys-Gly) (interchain with G-Cter in SUMO2); alternate. Thr1480 carries the phosphothreonine modification. Basic and acidic residues predominate over residues 1481 to 1493 (PEKRKRDHAEEVT). An N6-acetyllysine modification is found at Lys1496. 2 consecutive BRCT domains span residues 1510–1588 (APKV…DYLV) and 1609–1700 (RERR…FVLS).

In terms of assembly, homodimer. Interacts with H2AX, which requires phosphorylation of H2AX on 'Ser-139'. Interacts with the MRN complex, composed of MRE11, RAD50, and NBN. Interacts with CHEK2, which requires ATM-mediated phosphorylation of 'Thr-68' within the FHA domain of CHEK2. Interacts constitutively with the BRCA1-BARD1 complex, SMC1A and TP53BP1. Interacts with ATM and FANCD2, and these interactions are reduced upon DNA damage. Also interacts with the PRKDC complex, composed of XRCC6/KU70, XRCC5/KU80 and PRKDC/XRCC7. This interaction may be required for PRKDC autophosphorylation, which is essential for DNA double strand break (DSB) repair. When phosphorylated by ATM, interacts with RNF8 (via FHA domain). Interacts with CEP164. When phosphorylated, interacts with APTX (via FHA-like domain). Interacts (when phosphorylated) with TOPBP1; promoting TOPBP1 localization to DNA damage sites during mitosis. Interacts (when phosphorylated) with NBN; promoting NBN and MRN complex localization to DNA damage sites. Phosphorylated upon exposure to ionizing radiation (IR), ultraviolet radiation (UV), and hydroxyurea (HU). Phosphorylation in response to IR requires ATM, NBN, and possibly CHEK2. Also phosphorylated during the G2/M phase of the cell cycle and during activation of the mitotic spindle checkpoint. Phosphorylation at Thr-4 by ATM stabilizes and enhances homodimerization via the FHA domain. Phosphorylated at Ser-168 and Ser-198 by CK2 in response to DNA damage during mitosis, promoting interaction with TOPBP1. Phosphorylated by CK2 in response to DNA damage, promoting interaction with NBN and recruitment of the MRN complex to DNA damage sites. Post-translationally, sumoylation at Lys-1461 by PIAS4 following DNA damage promotes ubiquitin-mediated degradation. In terms of processing, ubiquitinated by RNF4, leading to proteasomal degradation; undergoes 'Lys-48'-linked polyubiquitination.

Its subcellular location is the nucleus. The protein localises to the chromosome. Functionally, histone reader protein required for checkpoint-mediated cell cycle arrest in response to DNA damage within both the S phase and G2/M phases of the cell cycle. Specifically recognizes and binds histone H2AX phosphorylated at 'Ser-139', a marker of DNA damage, serving as a scaffold for the recruitment of DNA repair and signal transduction proteins to discrete foci of DNA damage sites. Also required for downstream events subsequent to the recruitment of these proteins. These include phosphorylation and activation of the ATM, CHEK1 and CHEK2 kinases, and stabilization of TP53/p53 and apoptosis. ATM and CHEK2 may also be activated independently by a parallel pathway mediated by TP53BP1. Required for chromosomal stability during mitosis by promoting recruitment of TOPBP1 to DNA double strand breaks (DSBs): TOPBP1 forms filamentous assemblies that bridge MDC1 and tether broken chromosomes during mitosis. Required for the repair of DSBs via homologous recombination by promoting recruitment of NBN component of the MRN complex to DSBs. This Mus musculus (Mouse) protein is Mediator of DNA damage checkpoint protein 1 (Mdc1).